The following is a 147-amino-acid chain: D-aminoacyl-tRNA deacylase (147 aa).

A Gly-cisPro motif, important for rejection of L-amino acids motif is present at residues 136–137 (GP).

This sequence belongs to the DTD family. Homodimer.

It is found in the cytoplasm. It carries out the reaction glycyl-tRNA(Ala) + H2O = tRNA(Ala) + glycine + H(+). It catalyses the reaction a D-aminoacyl-tRNA + H2O = a tRNA + a D-alpha-amino acid + H(+). Functionally, an aminoacyl-tRNA editing enzyme that deacylates mischarged D-aminoacyl-tRNAs. Also deacylates mischarged glycyl-tRNA(Ala), protecting cells against glycine mischarging by AlaRS. Acts via tRNA-based rather than protein-based catalysis; rejects L-amino acids rather than detecting D-amino acids in the active site. By recycling D-aminoacyl-tRNA to D-amino acids and free tRNA molecules, this enzyme counteracts the toxicity associated with the formation of D-aminoacyl-tRNA entities in vivo and helps enforce protein L-homochirality. This is D-aminoacyl-tRNA deacylase from Streptococcus equi subsp. zooepidemicus (strain H70).